Here is a 346-residue protein sequence, read N- to C-terminus: Cyclin-dependent kinase 7 (346 aa).

Alanine 2 is modified (N-acetylalanine). Serine 7 carries the phosphoserine modification. One can recognise a Protein kinase domain in the interval 12-295 (YEKLDFLGEG…ASQALKTKYF (284 aa)). ATP is bound by residues 18–26 (LGEGQFATV) and lysine 41. Residue aspartate 137 is the Proton acceptor of the active site. At serine 164 the chain carries Phosphoserine; by CDK1 and CDK2. Threonine 170 carries the phosphothreonine; by CDK2 modification.

Belongs to the protein kinase superfamily. CMGC Ser/Thr protein kinase family. CDC2/CDKX subfamily. Associates primarily with cyclin-H (CCNH) and MAT1 to form the CAK complex. CAK can further associate with the core-TFIIH to form the TFIIH basal transcription factor; this complex is sensitive to UV light. The CAK complex binds to p53/TP53 in response to DNA damage. Interacts with CDK2, SF1/NR5A1, PUF60 and PRKCI. Interacts with HINT1. Post-translationally, phosphorylation of Ser-164 during mitosis inactivates the enzyme. Phosphorylation of Thr-170 is required for activity. Phosphorylated at Ser-164 and Thr-170 by CDK2.

The protein resides in the nucleus. It localises to the cytoplasm. The protein localises to the perinuclear region. The enzyme catalyses L-seryl-[protein] + ATP = O-phospho-L-seryl-[protein] + ADP + H(+). It catalyses the reaction L-threonyl-[protein] + ATP = O-phospho-L-threonyl-[protein] + ADP + H(+). It carries out the reaction [DNA-directed RNA polymerase] + ATP = phospho-[DNA-directed RNA polymerase] + ADP + H(+). With respect to regulation, phosphorylation at Thr-170 is required for enzymatic activity. The association of p53/TP53 to the CAK complex in response to DNA damage reduces kinase activity toward CDK2 and RNA polymerase II repetitive C-terminal domain (CTD), thus stopping cell cycle progression. Serine/threonine kinase involved in cell cycle control and in RNA polymerase II-mediated RNA transcription. Cyclin-dependent kinases (CDKs) are activated by the binding to a cyclin and mediate the progression through the cell cycle. Each different complex controls a specific transition between 2 subsequent phases in the cell cycle. Required for both activation and complex formation of CDK1/cyclin-B during G2-M transition, and for activation of CDK2/cyclins during G1-S transition (but not complex formation). CDK7 is the catalytic subunit of the CDK-activating kinase (CAK) complex. Phosphorylates SPT5/SUPT5H, SF1/NR5A1, POLR2A, p53/TP53, CDK1, CDK2, CDK4, CDK6 and CDK11B/CDK11. Initiates transcription by RNA polymerase II by mediating phosphorylation of POLR2A at 'Ser-5' of the repetitive C-terminal domain (CTD) when POLR2A is in complex with DNA, promoting dissociation from DNA and initiation. CAK activates the cyclin-associated kinases CDK1, CDK2, CDK4 and CDK6 by threonine phosphorylation, thus regulating cell cycle progression. CAK complexed to the core-TFIIH basal transcription factor activates RNA polymerase II by serine phosphorylation of the CTD of POLR2A, allowing its escape from the promoter and elongation of the transcripts. Its expression and activity are constant throughout the cell cycle. Upon DNA damage, triggers p53/TP53 activation by phosphorylation, but is inactivated in turn by p53/TP53; this feedback loop may lead to an arrest of the cell cycle and of the transcription, helping in cell recovery, or to apoptosis. Required for DNA-bound peptides-mediated transcription and cellular growth inhibition. In Mus musculus (Mouse), this protein is Cyclin-dependent kinase 7 (Cdk7).